The following is a 325-amino-acid chain: Aldo-keto reductase family 1 member D1 (325 aa).

NADP(+)-binding positions include G22–Y26 and D52. Position 26 (Y26) interacts with substrate. The substrate site is built by Y57, W88, E119, and Y131. Y57 (proton donor) is an active-site residue. Residues S168–N169, Q192, and H218–T223 each bind NADP(+). A Phosphoserine modification is found at S228. W229 lines the substrate pocket. K272–N282 lines the NADP(+) pocket.

It belongs to the aldo/keto reductase family.

Its subcellular location is the cytoplasm. It carries out the reaction 5beta-cholestan-3-one + NADP(+) = cholest-4-en-3-one + NADPH + H(+). The catalysed reaction is 4,5beta-dihydrocortisone + NADP(+) = cortisone + NADPH + H(+). It catalyses the reaction cortisol + NADPH + H(+) = 5beta-dihydrocortisol + NADP(+). The enzyme catalyses corticosterone + NADPH + H(+) = 5beta-dihydrocorticosterone + NADP(+). It carries out the reaction 7alpha,12alpha-dihydroxycholest-4-en-3-one + NADPH + H(+) = 7alpha,12alpha-dihydroxy-5beta-cholestan-3-one + NADP(+). The catalysed reaction is 7alpha-hydroxycholest-4-en-3-one + NADPH + H(+) = 7alpha-hydroxy-5beta-cholestan-3-one + NADP(+). It catalyses the reaction epitestosterone + NADPH + H(+) = 5beta-dihydroepitestosterone + NADP(+). The enzyme catalyses androst-4-ene-3,17-dione + NADPH + H(+) = 5beta-androstane-3,17-dione + NADP(+). It carries out the reaction progesterone + NADPH + H(+) = 5beta-pregnan-3,20-dione + NADP(+). The catalysed reaction is 21-hydroxyprogesterone + NADPH + H(+) = 5beta-dihydrodeoxycorticosterone + NADP(+). It catalyses the reaction aldosterone + NADPH + H(+) = 5beta-dihydroaldosterone + NADP(+). The enzyme catalyses 17beta-hydroxyandrosta-1,4-dien-3-one + NADPH + H(+) = 17beta-hydroxy-5beta-androst-1-en-3-one + NADP(+). It carries out the reaction 17beta-hydroxyestr-4-en-3-one + NADPH + H(+) = 17beta-hydroxy-5beta-estran-3-one + NADP(+). The catalysed reaction is 5beta-dihydrotestosterone + NADP(+) = testosterone + NADPH + H(+). It catalyses the reaction androst-4-ene-3,11,17-trione + NADPH + H(+) = 17beta-hydroxyandrost-4-ene-3,11-dione + NADP(+). Its activity is regulated as follows. Subject to inhibition by high substrate concentrations. Inhibited by testosterone concentrations above 10 uM. Inhibited by the primary and secondary bile acids chenodeoxycholic acid and ursodeoxycholic acid. Functionally, catalyzes the stereospecific NADPH-dependent reduction of the C4-C5 double bond of bile acid intermediates and steroid hormones carrying a delta(4)-3-one structure to yield an A/B cis-ring junction. This cis-configuration is crucial for bile acid biosynthesis and plays important roles in steroid metabolism. Capable of reducing a broad range of delta-(4)-3-ketosteroids from C18 (such as, 17beta-hydroxyestr-4-en-3-one) to C27 (such as, 7alpha-hydroxycholest-4-en-3-one). The sequence is that of Aldo-keto reductase family 1 member D1 (Akr1d1) from Mus musculus (Mouse).